Consider the following 447-residue polypeptide: BAG family molecular chaperone regulator 5 (447 aa).

5 consecutive BAG domains span residues 9–86, 95–167, 182–260, 275–350, and 365–442; these read SISR…EQNA, QNIF…EDCM, SVAK…DLEE, SIIK…DLKE, and PHKA…DMKS.

As to quaternary structure, binds to the ATPase domain of HSP/HSP70 chaperones. Binds PRKN. Interacts with HSPA8. Interacts with JPH2.

Functionally, co-chaperone for HSP/HSP70 proteins. It functions as a nucleotide-exchange factor promoting the release of ADP from HSP70, thereby activating HSP70-mediated protein refolding. Has an essential role in maintaining proteostasis at junctional membrane complexes (JMC), where it may function as a scaffold between the HSPA8 chaperone and JMC proteins enabling correct, HSPA8-dependent JMC protein folding. Inhibits both auto-ubiquitination of PRKN and ubiquitination of target proteins by PRKN. This Mus musculus (Mouse) protein is BAG family molecular chaperone regulator 5 (Bag5).